The sequence spans 338 residues: Eukaryotic translation initiation factor 3 subunit H (338 aa).

In terms of domain architecture, MPN spans 22-154; the sequence is VQCDGLAVMK…LKAYRLTPQA (133 aa).

This sequence belongs to the eIF-3 subunit H family. As to quaternary structure, component of the eukaryotic translation initiation factor 3 (eIF-3) complex. The eIF-3 complex interacts with pix. Interacts with mxt.

Its subcellular location is the cytoplasm. Component of the eukaryotic translation initiation factor 3 (eIF-3) complex, which is involved in protein synthesis of a specialized repertoire of mRNAs and, together with other initiation factors, stimulates binding of mRNA and methionyl-tRNAi to the 40S ribosome. The eIF-3 complex specifically targets and initiates translation of a subset of mRNAs involved in cell proliferation. This is Eukaryotic translation initiation factor 3 subunit H from Drosophila yakuba (Fruit fly).